Consider the following 800-residue polypeptide: Internalin A (800 aa).

The signal sequence occupies residues 1 to 35; it reads MRKKRYVWLKSILVAILVFGSGVWINTSNGTNAQA. The 41-residue stretch at 36–76 folds into the LRRNT domain; sequence ATITQDTPINQIFTDAALAEKMKTVLGKTNVTDTVSQTDLD. LRR repeat units follow at residues 77–98, 99–120, 121–142, 143–164, 165–186, 187–207, 208–229, 230–251, 252–273, 274–295, 296–317, 318–339, 340–361, 362–383, and 384–405; these read QVTT…EYLN, NLTQ…KDLT, KLVD…ANLT, NLTG…KNLT, NLNR…SGLT, NLQQ…ANLT, TLER…AKLT, NLES…GILT, NLDE…ASLT, NLTD…SGLT, KLTE…AGLT, ALTN…SNLK, NLTY…SSLT, KLQR…ANLT, and NINW…ANLT. Positions 416 to 505 constitute an LRRCT domain; that stretch reads AWTNAPVNYK…AIFNAKFHVD (90 aa). A B-1 repeat occupies 518–587; sequence LLTEPAKPVK…TTSQTVDYQG (70 aa). The interval 518-706 is 3 X approximate tandem repeats, type B; it reads LLTEPAKPVK…ITLYAQFTKN (189 aa). Residues 588 to 657 form a B-2 repeat; it reads LLQEPTPPTK…STTQAVDYQG (70 aa). A B-3 repeat occupies 658–706; that stretch reads LLKEPKAPTKAGYTFKGWYDEKTDGKKWDFATDKMPANDITLYAQFTKN. Residues 705 to 757 form a disordered region; sequence KNPVAPPTTGGNTPPTTNNGGNTTPPSANIPGSDTSNTSTGNSASTTSTMNAY. A compositionally biased stretch (low complexity) spans 711-753; the sequence is PTTGGNTPPTTNNGGNTTPPSANIPGSDTSNTSTGNSASTTST. Residues 767 to 771 carry the LPXTG sorting signal motif; the sequence is LPTTG. Residue T770 is modified to Pentaglycyl murein peptidoglycan amidated threonine. Residues 771 to 800 constitute a propeptide, removed by sortase A; the sequence is GDSDNALYLLLGLLAVGTAMALTKKARASK.

It belongs to the internalin family.

The protein resides in the secreted. It localises to the cell wall. Its function is as follows. Mediates the entry of Listeria monocytogenes into cells. Binds to host receptor cadherin-1 (E-cadherin, CDH1). The polypeptide is Internalin A (inlA) (Listeria monocytogenes serotype 1/2a (strain 10403S)).